A 611-amino-acid polypeptide reads, in one-letter code: Actin-interacting protein 1 (611 aa).

WD repeat units follow at residues 57–96 (EHSH…HILK), 145–185 (GQAR…FKST), 188–227 (EHTK…KTGV), 237–276 (AHSG…VEKT), 322–361 (GHNK…SNRV), 446–485 (PISY…VSEV), 489–528 (VHPA…ELAH), 534–573 (FHTA…DHPI), and 579–610 (HAMS…WNVP).

This sequence belongs to the WD repeat AIP1 family.

It is found in the cytoplasm. Its subcellular location is the cytoskeleton. Its function is as follows. Induces disassembly of actin filaments in conjunction with ADF/cofilin family proteins. Regulator of actin organization in myofibrils. The protein is Actin-interacting protein 1 (unc-78) of Caenorhabditis elegans.